The sequence spans 303 residues: MGNRVEFAKMNGLGNKILVVDMRGRADRVMPQAAIALAGNAETHFDQIMAIHDPKLAGTFAYIDIINCDGTLAQACGNGTRCVVQALSAETGLKAFTFQTLAGILNAVEHDDRTVSVDMGSPVFDWNRIPLSEEFHDTSRIELQIGPIDAPVLHSPAVMSMGNPHAVFWVDRDPMSYDLERFGPLLENHPLFPEKANITLAQVTSRTTMTTRTWERGAGLTLACGSAACAAGVSAARTGRAERKVTITVASSPNRQALDIEWRERDGHVIMTGAAEWEWAGQLDPQTGDWQREQQAGHEASVS.

Substrate contacts are provided by asparagine 15, glutamine 47, and asparagine 67. Residue cysteine 76 is the Proton donor of the active site. Substrate is bound by residues 77–78 (GN), asparagine 163, asparagine 197, and 215–216 (ER). Cysteine 224 (proton acceptor) is an active-site residue. 225–226 (GS) serves as a coordination point for substrate.

It belongs to the diaminopimelate epimerase family. In terms of assembly, homodimer.

Its subcellular location is the cytoplasm. It carries out the reaction (2S,6S)-2,6-diaminopimelate = meso-2,6-diaminopimelate. It functions in the pathway amino-acid biosynthesis; L-lysine biosynthesis via DAP pathway; DL-2,6-diaminopimelate from LL-2,6-diaminopimelate: step 1/1. Its function is as follows. Catalyzes the stereoinversion of LL-2,6-diaminopimelate (L,L-DAP) to meso-diaminopimelate (meso-DAP), a precursor of L-lysine and an essential component of the bacterial peptidoglycan. This chain is Diaminopimelate epimerase, found in Allorhizobium ampelinum (strain ATCC BAA-846 / DSM 112012 / S4) (Agrobacterium vitis (strain S4)).